Here is a 431-residue protein sequence, read N- to C-terminus: Tol-Pal system protein TolB (431 aa).

Positions 1–26 (MSLMTKLGFRALVASCLITAGSAANA) are cleaved as a signal peptide. Residues 406-431 (DGSAPPQILSVQGGSVREPSWGPFMQ) are disordered.

Belongs to the TolB family. The Tol-Pal system is composed of five core proteins: the inner membrane proteins TolA, TolQ and TolR, the periplasmic protein TolB and the outer membrane protein Pal. They form a network linking the inner and outer membranes and the peptidoglycan layer.

It localises to the periplasm. Part of the Tol-Pal system, which plays a role in outer membrane invagination during cell division and is important for maintaining outer membrane integrity. The protein is Tol-Pal system protein TolB of Burkholderia cenocepacia (strain ATCC BAA-245 / DSM 16553 / LMG 16656 / NCTC 13227 / J2315 / CF5610) (Burkholderia cepacia (strain J2315)).